Here is a 475-residue protein sequence, read N- to C-terminus: MDSKSSIVLEIGGRYTKCGYSPESSPRFIIPTNLLPLNISSYLSGGASFDNFKKEITSDNETITTTNQIPTKLPTQSQLKESLFIFFKTIFLNYLLCKSDERKIIIVENIFLPRLFRESMVSVLFEQYRVPLIVFINPTASLIPTLRTTALLIDSGFSETRVLPIYEGVGILKAYKSISLGSESLINQLKQYLQSNITNGIIIDNQNNQSITDSMICNQLLNDKILNSIQLLEDIITRCCFCSFKNKNNNNIEINNINYRISKEYSILIDGNNIRKGLVDVLYKDVNNNDNNNNNKEDDDENLEEGNIATTILNTLLKCEHDQRKPLSHNILLLGGTTMLAGFKKRLVLELHRQLKMNENSIYRNELFGLIGHFQFINHPFENNYLSWLGGSILANALEHVHSKITLESYLNAPSQFKRSQLIPEWEKLTNINNYTQIAQATMGTTINPLQFNSTSSLFSPFTSSSDLSSHLNKD.

This sequence belongs to the actin family.

The protein resides in the cytoplasm. Its subcellular location is the cytoskeleton. The chain is Actin-related protein 10 from Dictyostelium discoideum (Social amoeba).